A 352-amino-acid polypeptide reads, in one-letter code: Protein RecA (352 aa).

66–73 (GPESSGKT) contacts ATP.

The protein belongs to the RecA family.

It localises to the cytoplasm. Its function is as follows. Can catalyze the hydrolysis of ATP in the presence of single-stranded DNA, the ATP-dependent uptake of single-stranded DNA by duplex DNA, and the ATP-dependent hybridization of homologous single-stranded DNAs. It interacts with LexA causing its activation and leading to its autocatalytic cleavage. In Psychrobacter arcticus (strain DSM 17307 / VKM B-2377 / 273-4), this protein is Protein RecA.